The primary structure comprises 446 residues: uncharacterized protein (446 aa).

Phosphoserine is present on residues Ser-393 and Ser-397. The tract at residues 411–431 (LSSTERRDLDRVRDKQKKQDQ) is disordered.

Belongs to the IFRD family.

Its subcellular location is the cytoplasm. This is an uncharacterized protein from Schizosaccharomyces pombe (strain 972 / ATCC 24843) (Fission yeast).